A 152-amino-acid chain; its full sequence is Large ribosomal subunit protein uL22 (152 aa).

This sequence belongs to the universal ribosomal protein uL22 family. Part of the 50S ribosomal subunit.

Its function is as follows. This protein binds specifically to 23S rRNA. It makes multiple contacts with different domains of the 23S rRNA in the assembled 50S subunit and ribosome. Functionally, the globular domain of the protein is located near the polypeptide exit tunnel on the outside of the subunit, while an extended beta-hairpin is found that lines the wall of the exit tunnel in the center of the 70S ribosome. The protein is Large ribosomal subunit protein uL22 of Methanothrix thermoacetophila (strain DSM 6194 / JCM 14653 / NBRC 101360 / PT) (Methanosaeta thermophila).